A 572-amino-acid polypeptide reads, in one-letter code: Protein IQ-DOMAIN 30 (572 aa).

The segment at Ser-75 to Pro-96 is disordered. The segment covering Ser-82–Val-92 has biased composition (polar residues). IQ domains follow at residues Gln-108–Arg-136 and Leu-137–Leu-154. Positions Gly-159 to Gly-178 are calmodulin-binding. Disordered regions lie at residues Arg-282–Pro-332 and Ile-399–Arg-572. Polar residues-rich tracts occupy residues Pro-291 to Ser-305 and Gln-400 to Ile-419. Residues Ala-428–Lys-455 show a composition bias toward basic and acidic residues. Polar residues-rich tracts occupy residues Lys-459–Lys-493, Gln-502–Glu-514, and Leu-522–Glu-560.

This sequence belongs to the IQD family. As to quaternary structure, binds to multiple calmodulin (CaM) in the presence of Ca(2+) and CaM-like proteins.

It is found in the nucleus envelope. Its subcellular location is the cytoplasm. It localises to the cytoskeleton. May be involved in cooperative interactions with calmodulins or calmodulin-like proteins. Recruits calmodulin proteins to microtubules, thus being a potential scaffold in cellular signaling and trafficking. May associate with nucleic acids and regulate gene expression at the transcriptional or post-transcriptional level. The polypeptide is Protein IQ-DOMAIN 30 (Arabidopsis thaliana (Mouse-ear cress)).